A 346-amino-acid polypeptide reads, in one-letter code: Phosphoribosylformylglycinamidine cyclo-ligase (346 aa).

Belongs to the AIR synthase family.

The protein localises to the cytoplasm. It catalyses the reaction 2-formamido-N(1)-(5-O-phospho-beta-D-ribosyl)acetamidine + ATP = 5-amino-1-(5-phospho-beta-D-ribosyl)imidazole + ADP + phosphate + H(+). It participates in purine metabolism; IMP biosynthesis via de novo pathway; 5-amino-1-(5-phospho-D-ribosyl)imidazole from N(2)-formyl-N(1)-(5-phospho-D-ribosyl)glycinamide: step 2/2. In Bacillus mycoides (strain KBAB4) (Bacillus weihenstephanensis), this protein is Phosphoribosylformylglycinamidine cyclo-ligase.